The following is a 179-amino-acid chain: MASHIGKLPIEIPAGVEVTINGQEFAAKGAKGSDSYTIPEGVTAKVEGNEIIVTANDDLRPTRAKHGLARSIVASMVKGVHDGYSKSLDIVGTGYRAQMKGKGIEFSLGYSHTITVNPPEGITLELPNPNQVIVKGTDKQAVGQVAANIRKLRAPEPYKGKGIKYSDEVIRRKAGKAGK.

It belongs to the universal ribosomal protein uL6 family. As to quaternary structure, part of the 50S ribosomal subunit.

This protein binds to the 23S rRNA, and is important in its secondary structure. It is located near the subunit interface in the base of the L7/L12 stalk, and near the tRNA binding site of the peptidyltransferase center. In Bifidobacterium animalis subsp. lactis (strain AD011), this protein is Large ribosomal subunit protein uL6.